The primary structure comprises 152 residues: Xanthine-guanine phosphoribosyltransferase (152 aa).

5-phospho-alpha-D-ribose 1-diphosphate is bound by residues arginine 37–glycine 38, arginine 69, and aspartate 88–threonine 96. Residue arginine 69 coordinates GMP. Aspartate 89 provides a ligand contact to Mg(2+). Positions 92 and 135 each coordinate guanine. Xanthine is bound by residues aspartate 92 and isoleucine 135. Residues aspartate 92 to threonine 96 and tryptophan 134 to isoleucine 135 contribute to the GMP site.

This sequence belongs to the purine/pyrimidine phosphoribosyltransferase family. XGPT subfamily. As to quaternary structure, homotetramer. Requires Mg(2+) as cofactor.

The protein resides in the cell inner membrane. The catalysed reaction is GMP + diphosphate = guanine + 5-phospho-alpha-D-ribose 1-diphosphate. The enzyme catalyses XMP + diphosphate = xanthine + 5-phospho-alpha-D-ribose 1-diphosphate. It carries out the reaction IMP + diphosphate = hypoxanthine + 5-phospho-alpha-D-ribose 1-diphosphate. The protein operates within purine metabolism; GMP biosynthesis via salvage pathway; GMP from guanine: step 1/1. It participates in purine metabolism; XMP biosynthesis via salvage pathway; XMP from xanthine: step 1/1. Its function is as follows. Purine salvage pathway enzyme that catalyzes the transfer of the ribosyl-5-phosphate group from 5-phospho-alpha-D-ribose 1-diphosphate (PRPP) to the N9 position of the 6-oxopurines guanine and xanthine to form the corresponding ribonucleotides GMP (guanosine 5'-monophosphate) and XMP (xanthosine 5'-monophosphate), with the release of PPi. To a lesser extent, also acts on hypoxanthine. This Enterobacter sp. (strain 638) protein is Xanthine-guanine phosphoribosyltransferase.